A 433-amino-acid polypeptide reads, in one-letter code: Glutamate-1-semialdehyde 2,1-aminomutase (433 aa).

Position 270 is an N6-(pyridoxal phosphate)lysine (K270).

The protein belongs to the class-III pyridoxal-phosphate-dependent aminotransferase family. HemL subfamily. As to quaternary structure, homodimer. It depends on pyridoxal 5'-phosphate as a cofactor.

Its subcellular location is the cytoplasm. The enzyme catalyses (S)-4-amino-5-oxopentanoate = 5-aminolevulinate. It functions in the pathway porphyrin-containing compound metabolism; protoporphyrin-IX biosynthesis; 5-aminolevulinate from L-glutamyl-tRNA(Glu): step 2/2. The sequence is that of Glutamate-1-semialdehyde 2,1-aminomutase from Symbiobacterium thermophilum (strain DSM 24528 / JCM 14929 / IAM 14863 / T).